A 154-amino-acid polypeptide reads, in one-letter code: MVQAVAVLKGDAGVSGVVKFEQASESEPTTVSYEIAGNSPNAERGFHIHEFGDATNGCVSAGPHFNPFKKTHGAPTDEVRHVGDMGNVKTDENGVAKGSFKDSLIKLIGPTSVVGRSVVIHAGQDDLGKGDTEESLKTGNAGPRPACGVIGLTN.

Lys19 participates in a covalent cross-link: Glycyl lysine isopeptide (Lys-Gly) (interchain with G-Cter in SUMO). Residues Ser26 and Ser39 each carry the phosphoserine modification. Residue Glu43 participates in Zn(2+) binding. 3 residues coordinate Cu cation: His47, His49, and His64. The cysteines at positions 58 and 147 are disulfide-linked. His64 is a binding site for Zn(2+). A Glycyl lysine isopeptide (Lys-Gly) (interchain with G-Cter in SUMO) cross-link involves residue Lys70. Zn(2+) contacts are provided by His72, His81, and Asp84. Residues Ser99 and Ser117 each carry the phosphoserine modification. His121 contacts Cu cation. 2 positions are modified to phosphothreonine: Thr132 and Thr138. Arg144 contributes to the substrate binding site.

The protein belongs to the Cu-Zn superoxide dismutase family. Homodimer in holo form. In apo form, heterodimer with CCS1. Zinc-binding at 'His-16' of CCS1 and Glu-43 of apo-SOD1 is required for this heterodimerization. Cu cation serves as cofactor. Requires Zn(2+) as cofactor.

Its subcellular location is the cytoplasm. The protein resides in the mitochondrion intermembrane space. The enzyme catalyses 2 superoxide + 2 H(+) = H2O2 + O2. Destroys radicals which are normally produced within the cells and which are toxic to biological systems. This chain is Superoxide dismutase [Cu-Zn], found in Saccharomyces cerevisiae (strain ATCC 204508 / S288c) (Baker's yeast).